The primary structure comprises 161 residues: Phosphopantetheine adenylyltransferase (161 aa).

Thr9 contributes to the substrate binding site. Residues 9–10 (TF) and His17 contribute to the ATP site. Substrate is bound by residues Lys41, Leu73, and Arg87. ATP is bound by residues 88 to 90 (GLR), Glu98, and 123 to 129 (YSFISST).

This sequence belongs to the bacterial CoaD family. Homohexamer. The cofactor is Mg(2+).

The protein localises to the cytoplasm. The enzyme catalyses (R)-4'-phosphopantetheine + ATP + H(+) = 3'-dephospho-CoA + diphosphate. The protein operates within cofactor biosynthesis; coenzyme A biosynthesis; CoA from (R)-pantothenate: step 4/5. Functionally, reversibly transfers an adenylyl group from ATP to 4'-phosphopantetheine, yielding dephospho-CoA (dPCoA) and pyrophosphate. The polypeptide is Phosphopantetheine adenylyltransferase (Pseudomonas putida (strain ATCC 47054 / DSM 6125 / CFBP 8728 / NCIMB 11950 / KT2440)).